Consider the following 310-residue polypeptide: S-methyl-5'-thioadenosine phosphorylase (310 aa).

Phosphate contacts are provided by residues T20, 62-63 (RH), and 95-96 (SA). M197 provides a ligand contact to substrate. Residue S198 participates in phosphate binding. 221 to 223 (DYD) provides a ligand contact to substrate.

This sequence belongs to the PNP/MTAP phosphorylase family. MTAP subfamily. In terms of assembly, homotrimer.

It localises to the cytoplasm. Its subcellular location is the nucleus. The enzyme catalyses S-methyl-5'-thioadenosine + phosphate = 5-(methylsulfanyl)-alpha-D-ribose 1-phosphate + adenine. The protein operates within amino-acid biosynthesis; L-methionine biosynthesis via salvage pathway; S-methyl-5-thio-alpha-D-ribose 1-phosphate from S-methyl-5'-thioadenosine (phosphorylase route): step 1/1. Catalyzes the reversible phosphorylation of S-methyl-5'-thioadenosine (MTA) to adenine and 5-methylthioribose-1-phosphate. Involved in the breakdown of MTA, a major by-product of polyamine biosynthesis. Responsible for the first step in the methionine salvage pathway after MTA has been generated from S-adenosylmethionine. Has broad substrate specificity with 6-aminopurine nucleosides as preferred substrates. The sequence is that of S-methyl-5'-thioadenosine phosphorylase from Neurospora crassa (strain ATCC 24698 / 74-OR23-1A / CBS 708.71 / DSM 1257 / FGSC 987).